The following is a 271-amino-acid chain: Thiazole synthase (271 aa).

Lys-95 (schiff-base intermediate with DXP) is an active-site residue. 1-deoxy-D-xylulose 5-phosphate contacts are provided by residues Gly-156, 182-183 (AG), and 204-205 (NT).

The protein belongs to the ThiG family. Homotetramer. Forms heterodimers with either ThiH or ThiS.

The protein resides in the cytoplasm. It carries out the reaction [ThiS sulfur-carrier protein]-C-terminal-Gly-aminoethanethioate + 2-iminoacetate + 1-deoxy-D-xylulose 5-phosphate = [ThiS sulfur-carrier protein]-C-terminal Gly-Gly + 2-[(2R,5Z)-2-carboxy-4-methylthiazol-5(2H)-ylidene]ethyl phosphate + 2 H2O + H(+). It participates in cofactor biosynthesis; thiamine diphosphate biosynthesis. Catalyzes the rearrangement of 1-deoxy-D-xylulose 5-phosphate (DXP) to produce the thiazole phosphate moiety of thiamine. Sulfur is provided by the thiocarboxylate moiety of the carrier protein ThiS. In vitro, sulfur can be provided by H(2)S. The chain is Thiazole synthase from Yersinia pseudotuberculosis serotype O:3 (strain YPIII).